Consider the following 214-residue polypeptide: Insulin-like growth factor 2 (214 aa).

The interval 48 to 79 (EVASAETLCGGELVDALQFVCEDRGFYFSRPT) is b. 3 cysteine pairs are disulfide-bonded: Cys56-Cys97, Cys68-Cys110, and Cys96-Cys101. The c stretch occupies residues 80–90 (SRSNSRRSQNR). The segment at 91–111 (GIVEECCFRSCDLNLLEQYCA) is a. Positions 112–117 (KPAKSE) are d. Positions 118 to 214 (RDVSATSLQI…PPTDNYVSHN (97 aa)) are cleaved as a propeptide — e peptide.

The protein belongs to the insulin family.

Its subcellular location is the secreted. Its function is as follows. The insulin-like growth factors, isolated from plasma, are structurally and functionally related to insulin but have a much higher growth-promoting activity. Acts as a ligand for integrin which is required for IGF2 signaling. The polypeptide is Insulin-like growth factor 2 (Oncorhynchus mykiss (Rainbow trout)).